Here is a 354-residue protein sequence, read N- to C-terminus: Guanine nucleotide-binding protein G(o) subunit alpha (354 aa).

G2 carries N-myristoyl glycine lipidation. C3 is lipidated: S-palmitoyl cysteine. A G-alpha domain is found at 32-354 (KDVKLLLLGA…AYNLRGCGLY (323 aa)). The segment at 35-48 (KLLLLGAGESGKST) is G1 motif. E43, K46, S47, T48, S152, L176, R177, T178, and R179 together coordinate GTP. S47 serves as a coordination point for Mg(2+). The G2 motif stretch occupies residues 174–182 (DILRTRVKT). T182 serves as a coordination point for Mg(2+). Residues 197 to 206 (FRLFDVGGQR) are G3 motif. Residues 266 to 273 (ILFLNKKD) form a G4 motif region. N270, D273, and C325 together coordinate GTP. Residues 324–329 (TCATDT) form a G5 motif region.

This sequence belongs to the G-alpha family. G(i/o/t/z) subfamily. In terms of assembly, g proteins are composed of 3 units; alpha, beta and gamma.

It carries out the reaction GTP + H2O = GDP + phosphate + H(+). Functionally, guanine nucleotide-binding proteins (G proteins) function as transducers downstream of G protein-coupled receptors (GPCRs) in numerous signaling cascades. The alpha chain contains the guanine nucleotide binding site and alternates between an active, GTP-bound state and an inactive, GDP-bound state. Signaling by an activated GPCR promotes GDP release and GTP binding. The alpha subunit has a low GTPase activity that converts bound GTP to GDP, thereby terminating the signal. Both GDP release and GTP hydrolysis are modulated by numerous regulatory proteins. Signaling is mediated via effector proteins, such as adenylate cyclase. Inhibits adenylate cyclase activity, leading to decreased intracellular cAMP levels. The protein is Guanine nucleotide-binding protein G(o) subunit alpha (gna0) of Xenopus laevis (African clawed frog).